The sequence spans 200 residues: Probable GTP-binding protein EngB (200 aa).

An EngB-type G domain is found at 26-200 (SIPEVALAGR…IYEIAQCIKK (175 aa)). Residues 34 to 41 (GRSNVGKS), 61 to 65 (GCTRQ), 80 to 83 (DLPG), 147 to 150 (TKID), and 179 to 181 (VSS) each bind GTP. Mg(2+) contacts are provided by Ser-41 and Thr-63.

The protein belongs to the TRAFAC class TrmE-Era-EngA-EngB-Septin-like GTPase superfamily. EngB GTPase family. Mg(2+) is required as a cofactor.

Its function is as follows. Necessary for normal cell division and for the maintenance of normal septation. The chain is Probable GTP-binding protein EngB from Ehrlichia ruminantium (strain Welgevonden).